The following is a 502-amino-acid chain: NAD(P)H-quinone oxidoreductase chain 4, chloroplastic (502 aa).

14 helical membrane passes run 4–24 (FPWLTIIVGLPIFAGTLIFFF), 37–57 (ICICILELLITAYVFCYHFQL), 87–107 (VGPILLTGFITTLATLAAWPV), 113–130 (LFHFLMLAMYSGQIGLFS), 134–154 (LLLFFIMWEFELIPVYLLLSM), 167–187 (FILYTAGGSIFLLMGVLGMGL), 208–228 (ALEILFYFGFLIGYAVKLPII), 242–262 (HYSTCMLLAGILLKMGAYGLV), 272–292 (AHSIFSPWLIIVGAIQIIYAA), 305–325 (IAYSSVSHMGFIIIGICSITD), 330–350 (GAILQMISHGFIGAALFFLAG), 374–396 (IFTMFSSFSMASLALPGMSGFAA), 416–436 (ILITFVTAIGMILTPIYSLSM), and 464–484 (LFVSICIFLPVIGIGIYPDFV).

This sequence belongs to the complex I subunit 4 family.

It localises to the plastid. It is found in the chloroplast thylakoid membrane. The enzyme catalyses a plastoquinone + NADH + (n+1) H(+)(in) = a plastoquinol + NAD(+) + n H(+)(out). The catalysed reaction is a plastoquinone + NADPH + (n+1) H(+)(in) = a plastoquinol + NADP(+) + n H(+)(out). The polypeptide is NAD(P)H-quinone oxidoreductase chain 4, chloroplastic (Ranunculus macranthus (Large buttercup)).